The sequence spans 129 residues: Large ribosomal subunit protein bL32m (129 aa).

The N-terminal 63 residues, 1-63 (MAAMTAAAAA…LEDIWEGILR (63 aa)), are a transit peptide targeting the mitochondrion. The Zn(2+) site is built by Cys-94, Cys-97, Cys-107, and Cys-110.

It belongs to the bacterial ribosomal protein bL32 family. In terms of assembly, component of the mitochondrial large ribosomal subunit (mt-LSU). Mature N.crassa 74S mitochondrial ribosomes consist of a small (37S) and a large (54S) subunit. The 37S small subunit contains a 16S ribosomal RNA (16S mt-rRNA) and 32 different proteins. The 54S large subunit contains a 23S rRNA (23S mt-rRNA) and 42 different proteins. bL32m has a zinc binding site. MRPL32 precursor is processed by the m-AAA protease (composed of YTA12/RCA1 and YTA10/AFG3), which cleaves the N-terminal transit peptide. Cleavage by the m-AAA protease takes place prior to assembly into the large subunit, an essential step for mitochondrial ribosome (mitoribosome) assembly. Proper processing by the m-AAA protease is dependent on the zinc-binding region within the tightly folded C-terminal domain of MRPL32: zinc-dependent folding halts degradation initiated from the N-terminus and triggers the release of mature MRPL32.

It localises to the mitochondrion. In terms of biological role, component of the mitochondrial ribosome (mitoribosome), a dedicated translation machinery responsible for the synthesis of mitochondrial genome-encoded proteins, including at least some of the essential transmembrane subunits of the mitochondrial respiratory chain. The mitoribosomes are attached to the mitochondrial inner membrane and translation products are cotranslationally integrated into the membrane. The chain is Large ribosomal subunit protein bL32m (mrpl32) from Neurospora crassa (strain ATCC 24698 / 74-OR23-1A / CBS 708.71 / DSM 1257 / FGSC 987).